A 217-amino-acid chain; its full sequence is Small ribosomal subunit protein uS3 (217 aa).

Residues 38–106 (VRKYIETALK…RVHINIIEIK (69 aa)) form the KH type-2 domain.

It belongs to the universal ribosomal protein uS3 family. As to quaternary structure, part of the 30S ribosomal subunit. Forms a tight complex with proteins S10 and S14.

In terms of biological role, binds the lower part of the 30S subunit head. Binds mRNA in the 70S ribosome, positioning it for translation. This Lysinibacillus sphaericus (strain C3-41) protein is Small ribosomal subunit protein uS3.